The chain runs to 799 residues: Valine--tRNA ligase (799 aa).

Lys536 is a binding site for ATP.

Belongs to the class-I aminoacyl-tRNA synthetase family. ValS type 2 subfamily.

Its subcellular location is the cytoplasm. The catalysed reaction is tRNA(Val) + L-valine + ATP = L-valyl-tRNA(Val) + AMP + diphosphate. Catalyzes the attachment of valine to tRNA(Val). As ValRS can inadvertently accommodate and process structurally similar amino acids such as threonine, to avoid such errors, it has a 'posttransfer' editing activity that hydrolyzes mischarged Thr-tRNA(Val) in a tRNA-dependent manner. The protein is Valine--tRNA ligase (valS) of Pyrobaculum aerophilum (strain ATCC 51768 / DSM 7523 / JCM 9630 / CIP 104966 / NBRC 100827 / IM2).